The sequence spans 205 residues: Large ribosomal subunit protein bL9 (205 aa).

A disordered region spans residues 160 to 205 (RDRKSRNAAAASEVQDAPVEDGGDEVVSVDSVAAEDGGADASGGTA). Over residues 184–195 (EVVSVDSVAAED) the composition is skewed to low complexity.

Belongs to the bacterial ribosomal protein bL9 family.

Its function is as follows. Binds to the 23S rRNA. The sequence is that of Large ribosomal subunit protein bL9 from Anaplasma phagocytophilum (strain HZ).